A 255-amino-acid polypeptide reads, in one-letter code: tRNA (guanine-N(1)-)-methyltransferase (255 aa).

Residues glycine 117 and 137 to 142 (LGDFVL) contribute to the S-adenosyl-L-methionine site.

The protein belongs to the RNA methyltransferase TrmD family. Homodimer.

It localises to the cytoplasm. The catalysed reaction is guanosine(37) in tRNA + S-adenosyl-L-methionine = N(1)-methylguanosine(37) in tRNA + S-adenosyl-L-homocysteine + H(+). Specifically methylates guanosine-37 in various tRNAs. The protein is tRNA (guanine-N(1)-)-methyltransferase of Paraburkholderia phytofirmans (strain DSM 17436 / LMG 22146 / PsJN) (Burkholderia phytofirmans).